The primary structure comprises 815 residues: Probable bifunctional folylpolyglutamate synthase/dihydropteroate synthase (815 aa).

The segment at 1–416 (MRYDEAANFL…LVAGSLFAVA (416 aa)) is folylpolyglutamate synthase. 47-53 (GSNGKGS) contacts ATP. In terms of domain architecture, Pterin-binding spans 553–803 (TAVMGILNVT…DVPENVAAVR (251 aa)). A DHPS region spans residues 555 to 815 (VMGILNVTPD…EATRTGADAE (261 aa)). Residue Asn560 coordinates Mg(2+). Residues Thr600, Asp633, Asn652, Asp722, Lys758, and 791–793 (RVH) each bind (7,8-dihydropterin-6-yl)methyl diphosphate.

This sequence in the N-terminal section; belongs to the folylpolyglutamate synthase family. It in the C-terminal section; belongs to the DHPS family. Mg(2+) is required as a cofactor.

It carries out the reaction (6S)-5,6,7,8-tetrahydrofolyl-(gamma-L-Glu)(n) + L-glutamate + ATP = (6S)-5,6,7,8-tetrahydrofolyl-(gamma-L-Glu)(n+1) + ADP + phosphate + H(+). It catalyses the reaction (7,8-dihydropterin-6-yl)methyl diphosphate + 4-aminobenzoate = 7,8-dihydropteroate + diphosphate. It participates in cofactor biosynthesis; tetrahydrofolylpolyglutamate biosynthesis. It functions in the pathway cofactor biosynthesis; tetrahydrofolate biosynthesis; 7,8-dihydrofolate from 2-amino-4-hydroxy-6-hydroxymethyl-7,8-dihydropteridine diphosphate and 4-aminobenzoate: step 1/2. Functionally, can complement an H.volcanii mutant strain that is thymidine auxotroph because it lacks the two dihydrofolate reductase genes encoded by hdrA and hdrB. The protein is Probable bifunctional folylpolyglutamate synthase/dihydropteroate synthase (folP) of Halobacterium salinarum (strain ATCC 700922 / JCM 11081 / NRC-1) (Halobacterium halobium).